Here is a 137-residue protein sequence, read N- to C-terminus: Nucleoside diphosphate kinase (137 aa).

ATP is bound by residues K10, F58, R86, T92, R103, and N113. H116 serves as the catalytic Pros-phosphohistidine intermediate.

Belongs to the NDK family. In terms of assembly, homotetramer. Mg(2+) serves as cofactor.

It is found in the cytoplasm. The catalysed reaction is a 2'-deoxyribonucleoside 5'-diphosphate + ATP = a 2'-deoxyribonucleoside 5'-triphosphate + ADP. It carries out the reaction a ribonucleoside 5'-diphosphate + ATP = a ribonucleoside 5'-triphosphate + ADP. Functionally, major role in the synthesis of nucleoside triphosphates other than ATP. The ATP gamma phosphate is transferred to the NDP beta phosphate via a ping-pong mechanism, using a phosphorylated active-site intermediate. This is Nucleoside diphosphate kinase from Helicobacter pylori (strain ATCC 700392 / 26695) (Campylobacter pylori).